Here is a 231-residue protein sequence, read N- to C-terminus: Probable transaldolase (231 aa).

The active-site Schiff-base intermediate with substrate is the Lys-83.

The protein belongs to the transaldolase family. Type 3B subfamily.

The protein resides in the cytoplasm. The catalysed reaction is D-sedoheptulose 7-phosphate + D-glyceraldehyde 3-phosphate = D-erythrose 4-phosphate + beta-D-fructose 6-phosphate. It participates in carbohydrate degradation; pentose phosphate pathway; D-glyceraldehyde 3-phosphate and beta-D-fructose 6-phosphate from D-ribose 5-phosphate and D-xylulose 5-phosphate (non-oxidative stage): step 2/3. In terms of biological role, transaldolase is important for the balance of metabolites in the pentose-phosphate pathway. The chain is Probable transaldolase from Rhodospirillum centenum (strain ATCC 51521 / SW).